Consider the following 276-residue polypeptide: tRNA dimethylallyltransferase (276 aa).

An interaction with substrate tRNA region spans residues 9-12 (DSLS).

The protein belongs to the IPP transferase family. Monomer. Mg(2+) serves as cofactor.

The enzyme catalyses adenosine(37) in tRNA + dimethylallyl diphosphate = N(6)-dimethylallyladenosine(37) in tRNA + diphosphate. Its function is as follows. Catalyzes the transfer of a dimethylallyl group onto the adenine at position 37 in tRNAs that read codons beginning with uridine, leading to the formation of N6-(dimethylallyl)adenosine (i(6)A). The sequence is that of tRNA dimethylallyltransferase (miaA) from Helicobacter pylori (strain HPAG1).